Reading from the N-terminus, the 37-residue chain is Photosystem II reaction center protein M (37 aa).

The helical transmembrane segment at G7 to V27 threads the bilayer.

This sequence belongs to the PsbM family. In terms of assembly, PSII is composed of 1 copy each of membrane proteins PsbA, PsbB, PsbC, PsbD, PsbE, PsbF, PsbH, PsbI, PsbJ, PsbK, PsbL, PsbM, PsbT, PsbX, PsbY, PsbZ, Psb30/Ycf12, at least 3 peripheral proteins of the oxygen-evolving complex and a large number of cofactors. It forms dimeric complexes.

The protein localises to the plastid. It is found in the chloroplast thylakoid membrane. In terms of biological role, one of the components of the core complex of photosystem II (PSII). PSII is a light-driven water:plastoquinone oxidoreductase that uses light energy to abstract electrons from H(2)O, generating O(2) and a proton gradient subsequently used for ATP formation. It consists of a core antenna complex that captures photons, and an electron transfer chain that converts photonic excitation into a charge separation. This subunit is found at the monomer-monomer interface. The chain is Photosystem II reaction center protein M from Pinus koraiensis (Korean pine).